We begin with the raw amino-acid sequence, 196 residues long: Ribosome maturation factor RimP (196 aa).

The interval 163–196 (GLAPSKPTGPAPKRPKPKTNSSSNEPAAKKPRAE) is disordered.

It belongs to the RimP family.

Its subcellular location is the cytoplasm. Its function is as follows. Required for maturation of 30S ribosomal subunits. The protein is Ribosome maturation factor RimP of Stenotrophomonas maltophilia (strain R551-3).